Here is a 1014-residue protein sequence, read N- to C-terminus: Disease resistance protein RGA4 (1014 aa).

Residues 1–182 (MEAALLSGFI…PRIHEADLVG (182 aa)) form a structured coiled coil (CC) domain region. Residues 105-145 (RTVRATKKLLQTNQHLAQELQRLKRMVEEANQRKQRYTAAA) adopt a coiled-coil conformation. Positions 189 to 466 (ELLEQLAERQ…WLAEGFVEPV (278 aa)) constitute an NB-ARC domain. 11 LRR repeats span residues 484-506 (RNII…TYGM), 507-530 (MREF…DKFL), 531-552 (PKYV…NFNG), 580-602 (LRVL…ICNL), 603-624 (VLLK…IAKL), 625-647 (KDLE…VFGL), 701-725 (MNKL…DLRE), 762-784 (PCYL…VTSL), 785-807 (RGLK…ALSN), 808-833 (LSYL…GFPR), and 854-877 (LPFL…KIEC).

The protein belongs to the disease resistance NB-LRR family. As to expression, expressed in leaves.

Its function is as follows. Probable disease resistance protein. Resistance proteins guard the plant against pathogens that contain an appropriate avirulence protein via an indirect interaction with this avirulence protein. That triggers a defense system including the hypersensitive response, which restricts the pathogen growth. At the opposite of cultivars Aichi asahi and Sasanishiki, the cultivars Nipponbare, Mokoto and Hitomebore don't recognize the effector avirulence protein AVR-Pia from M.oryzae. The protein is Disease resistance protein RGA4 of Oryza sativa subsp. japonica (Rice).